Reading from the N-terminus, the 1378-residue chain is High molecular weight rhoptry protein 2 (1378 aa).

An N-terminal signal peptide occupies residues 1 to 19 (MIKVTIFLLLSIFSFNLYG). 2 disulfides stabilise this stretch: Cys-46/Cys-71 and Cys-233/Cys-240. The chain crosses the membrane as a helical span at residues 739–759 (FVYASYILGLVFFIESHIDIA). Intrachain disulfides connect Cys-791/Cys-851, Cys-871/Cys-912, and Cys-947/Cys-1034.

In terms of assembly, component of the RhopH complex. RhopH complex is composed of CLAG3.1/CLAG3.2, RhopH2 and RhopH3 with a 1:1:1 subunit stoichiometry. Interacts with CLAG3.1/CLAG3.2.

The protein localises to the host cell membrane. It localises to the parasitophorous vacuole membrane. The protein resides in the host cytoplasm. It is found in the cytoplasm. Its subcellular location is the cytoplasmic vesicle. The protein localises to the secretory vesicle. It localises to the rhoptry. Its function is as follows. Participates in the formation of new permeability pathways in Plasmodium-infected erythrocytes enabling the uptake of nutrients from the blood plasma. Required for maintaining invasion capacity of merozoites. Required for parasite growth and proliferation. The polypeptide is High molecular weight rhoptry protein 2 (Plasmodium falciparum (isolate 3D7)).